The sequence spans 308 residues: Solute carrier family 25 member 47 (308 aa).

Solcar repeat units follow at residues 1–80 (MDFV…CLAH), 93–206 (PTKA…LCEW), and 215–302 (PDVP…VLRL). Transmembrane regions (helical) follow at residues 3 to 23 (FVAGAIGGVCGVAVGYPLDTV), 49 to 69 (VWGFYRGLSLPVCTVSLVSSV), 98 to 116 (ITLSGCASGLVRVFLTSPT), 190 to 210 (GHSFATYFLSYAVLCEWLSPA), 217 to 237 (VPGVLVAGGCAGVLAWAVATP), and 273 to 293 (VLFKGLVLNCCRAFPVNMVVF).

Belongs to the mitochondrial carrier (TC 2.A.29) family. Specifically expressed in liver.

It is found in the mitochondrion inner membrane. The protein resides in the mitochondrion outer membrane. It carries out the reaction NAD(+)(in) = NAD(+)(out). It catalyses the reaction acetyl-CoA(in) = acetyl-CoA(out). Functionally, mitochondrial NAD(+) transporter that acts as a 'metabolic gate' in hepatic lipogenesis. Provides NAD(+) substrate to mitochondrial SIRT3 deacetylase and enables its NAD(+)-dependent activities in mitochondrial energy metabolism. This triggers downstream activation of PRKAA1/AMPK-alpha signaling cascade that negatively regulates sterol regulatory element-binding protein (SREBP) transcriptional activities and ATP-consuming lipogenesis to restore cellular energy balance. May transport other mitochondrial metabolites having an aromatic nucleotide and phosphate groups, such as acetyl-CoA. Does not transport amino acids. The transport mechanism remains to be elucidated. The protein is Solute carrier family 25 member 47 of Homo sapiens (Human).